Reading from the N-terminus, the 286-residue chain is Shikimate dehydrogenase (NADP(+)) (286 aa).

Shikimate is bound by residues 25–27 (SLS) and threonine 72. The active-site Proton acceptor is lysine 76. Residue glutamate 88 coordinates NADP(+). Residues asparagine 97 and aspartate 113 each contribute to the shikimate site. NADP(+) is bound by residues 138 to 142 (GSGGA), 162 to 167 (NRTIER), and isoleucine 232. Tyrosine 234 provides a ligand contact to shikimate. An NADP(+)-binding site is contributed by glycine 255.

This sequence belongs to the shikimate dehydrogenase family. Homodimer.

It carries out the reaction shikimate + NADP(+) = 3-dehydroshikimate + NADPH + H(+). Its pathway is metabolic intermediate biosynthesis; chorismate biosynthesis; chorismate from D-erythrose 4-phosphate and phosphoenolpyruvate: step 4/7. Functionally, involved in the biosynthesis of the chorismate, which leads to the biosynthesis of aromatic amino acids. Catalyzes the reversible NADPH linked reduction of 3-dehydroshikimate (DHSA) to yield shikimate (SA). The protein is Shikimate dehydrogenase (NADP(+)) of Magnetococcus marinus (strain ATCC BAA-1437 / JCM 17883 / MC-1).